Reading from the N-terminus, the 968-residue chain is Probable transport protein MmpL2 (968 aa).

11 helical membrane-spanning segments follow: residues 22 to 42 (FAVVIVLLWLGFTAFVNLAVP), 204 to 224 (VIAAMLLVIYRSVITAVLVLI), 245 to 265 (IFSLSTFATNLLVLMAIAAST), 297 to 317 (AHVILGSGLTIAGAMYCLSFA), 328 to 348 (PIAIGMLVAVLAALTLGPAVL), 378 to 398 (WPGPVLAATCLVASIGLLALP), 763 to 783 (YDLLIAGVAAISLILIIMMII), 787 to 807 (VVAAVVIVGTVVLSMGASFGL), 815 to 835 (ILGIELYWMVLAMSVILLLAV), 866 to 886 (TGGVVTAAGMVFAVTMSLFVF), and 890 to 910 (RIIGQIGTTIGLGLLFDTLVV).

This sequence belongs to the resistance-nodulation-cell division (RND) (TC 2.A.6) family. MmpL subfamily.

It is found in the cell membrane. The sequence is that of Probable transport protein MmpL2 (mmpL2) from Mycobacterium tuberculosis (strain CDC 1551 / Oshkosh).